Reading from the N-terminus, the 107-residue chain is 2Fe-2S ferredoxin CtmE (107 aa).

One can recognise a 2Fe-2S ferredoxin-type domain in the interval 3 to 106; that stretch reads VKVTYVDSAN…GLVIHTLEPE (104 aa). The [2Fe-2S] cluster site is built by Cys-41, Cys-47, Cys-50, and Cys-87.

This sequence belongs to the adrenodoxin/putidaredoxin family. The cofactor is [2Fe-2S] cluster.

It functions in the pathway terpene metabolism; monoterpene degradation. In terms of biological role, involved in the degradation of the cyclic monoterpene limonene. Probably part of an electron transfer system involved in the oxidation of limonene to perillyl alcohol. This Castellaniella defragrans (strain DSM 12143 / CCUG 39792 / 65Phen) (Alcaligenes defragrans) protein is 2Fe-2S ferredoxin CtmE.